Here is a 314-residue protein sequence, read N- to C-terminus: Deoxymugineic acid synthase 1 (314 aa).

The tract at residues 1-21 (MGAGDRTVAGMPRIGMGTAVQ) is disordered. Asp-44 is an NADP(+) binding site. Tyr-49 serves as the catalytic Proton donor. His-112 provides a ligand contact to substrate. NADP(+) contacts are provided by residues 158-159 (AN), Gln-180, 258-266 (FDEARMREN), and 273-281 (ELTEEERRR).

It belongs to the aldo/keto reductase family.

It carries out the reaction 2'-deoxymugineate + NAD(+) = 3''-deamino-3''-oxonicotianamine + NADH + H(+). The enzyme catalyses 2'-deoxymugineate + NADP(+) = 3''-deamino-3''-oxonicotianamine + NADPH + H(+). Its pathway is siderophore biosynthesis. Catalyzes the reduction of a 3''-keto intermediate during the biosynthesis of 2'-deoxymugineic acid (DMA) from L-Met. Involved in the formation of phytosiderophores (MAs) belonging to the mugineic acid family and required to acquire iron. This Hordeum vulgare (Barley) protein is Deoxymugineic acid synthase 1.